A 249-amino-acid polypeptide reads, in one-letter code: Adenosylcobinamide-GDP ribazoletransferase (249 aa).

6 consecutive transmembrane segments (helical) span residues 36–56 (LVGF…HSIG), 57–77 (LNLA…GGLH), 106–126 (VGAM…AFLF), 133–153 (KLTA…LAIT), 188–208 (LWLF…ITWL), and 226–246 (GALG…GQQI).

It belongs to the CobS family. Mg(2+) is required as a cofactor.

It localises to the cell membrane. It catalyses the reaction alpha-ribazole + adenosylcob(III)inamide-GDP = adenosylcob(III)alamin + GMP + H(+). The enzyme catalyses alpha-ribazole 5'-phosphate + adenosylcob(III)inamide-GDP = adenosylcob(III)alamin 5'-phosphate + GMP + H(+). It functions in the pathway cofactor biosynthesis; adenosylcobalamin biosynthesis; adenosylcobalamin from cob(II)yrinate a,c-diamide: step 7/7. Its function is as follows. Joins adenosylcobinamide-GDP and alpha-ribazole to generate adenosylcobalamin (Ado-cobalamin). Also synthesizes adenosylcobalamin 5'-phosphate from adenosylcobinamide-GDP and alpha-ribazole 5'-phosphate. The sequence is that of Adenosylcobinamide-GDP ribazoletransferase from Desulforamulus reducens (strain ATCC BAA-1160 / DSM 100696 / MI-1) (Desulfotomaculum reducens).